A 263-amino-acid chain; its full sequence is tRNA pseudouridine synthase A (263 aa).

Asp-53 serves as the catalytic Nucleophile. Tyr-111 lines the substrate pocket. Residues 232 to 263 (TAPGHGLISGRSNMTNGKLENNKTTNPCVTKY) are disordered. The span at 241 to 263 (GRSNMTNGKLENNKTTNPCVTKY) shows a compositional bias: polar residues.

Belongs to the tRNA pseudouridine synthase TruA family. Homodimer.

It carries out the reaction uridine(38/39/40) in tRNA = pseudouridine(38/39/40) in tRNA. In terms of biological role, formation of pseudouridine at positions 38, 39 and 40 in the anticodon stem and loop of transfer RNAs. The protein is tRNA pseudouridine synthase A of Halalkalibacterium halodurans (strain ATCC BAA-125 / DSM 18197 / FERM 7344 / JCM 9153 / C-125) (Bacillus halodurans).